Here is a 318-residue protein sequence, read N- to C-terminus: MASVQRKSWCALTIRLLGRTEIRRLAKELEFRPRKSLGQNFVHDANTVRRVVSTSGVSRSDHVLEVGPGLGPLTLALLDRGAHVTAVEIDPVLAERLPHTVAEHSHSEIQRLTVLNRDVLTLRRDELAEPPTAVVANLPYNVAVPALLHLLAEFPSIRTVTVMVQAEVAERLAAEPGGKEYGVPSVKVRFFGRVRRCGMVSPTVFWPIPRVYSGLVRIDRYPTSPWPTDPAFRRQVFELVDIAFGQRRKTCRNAFVDWAGSGNESADRLLAASIDPARRGETLSIDDFVRLLQRSADRGGTDREGTSPPTAGQGAPAR.

S-adenosyl-L-methionine is bound by residues Asn40, Val42, Gly67, Glu88, Asp118, and Asn137. The span at 295-305 (SADRGGTDREG) shows a compositional bias: basic and acidic residues. The interval 295–318 (SADRGGTDREGTSPPTAGQGAPAR) is disordered.

The protein belongs to the class I-like SAM-binding methyltransferase superfamily. rRNA adenine N(6)-methyltransferase family. RsmA subfamily.

It localises to the cytoplasm. The catalysed reaction is adenosine(1518)/adenosine(1519) in 16S rRNA + 4 S-adenosyl-L-methionine = N(6)-dimethyladenosine(1518)/N(6)-dimethyladenosine(1519) in 16S rRNA + 4 S-adenosyl-L-homocysteine + 4 H(+). Its function is as follows. Specifically dimethylates two adjacent adenosines (A1518 and A1519) in the loop of a conserved hairpin near the 3'-end of 16S rRNA in the 30S particle. May play a critical role in biogenesis of 30S subunits. This chain is Ribosomal RNA small subunit methyltransferase A, found in Mycolicibacterium paratuberculosis (strain ATCC BAA-968 / K-10) (Mycobacterium paratuberculosis).